We begin with the raw amino-acid sequence, 574 residues long: MYAPPFVRAFGIAVLAVLPSFSSPATAASLKSSGSSSSCRCFPGDACWPSPADWKAFNQSVGGRLIATVPLGSVCHGTTYDAARCADVKAAWPYADTHTDSSSSVLAPFFANQSCDPFLPRETPCVIGTYVQYAVNVSSVADIQKTLAFSQKKNLRLVVRNTGHDYFGKSTGAGGLGLWMHNLKTYDIHDYKSAAYTGKAVTMGAGIQAGESAATAFKQGLTIVSGICPTVGLAGGYTQGGGLGPLTTRYGLGADQVLEWHAVLANGSEITATPTKNSDLYWALTGGGGGTYAVVYSMTVKAHANEKTTGANLTFPNAGSEDVFFQGVQAFHDIIPAISDAGGTAVWTVLSKALSVGPVTGPNMTKATMDSIFQPVLQKLDALNITYSYSSGEFSSFYESNAAYDPPVVSNGLQIGGRLVKRSDFTGNPDGFIQAIRGIADQGGLVTGASYQLSSSLQHPPNSVNPELRKSLISFQIGVPWINTDWATDLHNQDLITNSFVPALAALLPSGGSAYLNQADFREPGWQQVFYGENYEKLLELKDVYDPNGVFWGRTTVGSERWAETEDKRLCRVS.

Residues 1–27 (MYAPPFVRAFGIAVLAVLPSFSSPATA) form the signal peptide. Residues N58, N112, N136, N266, N312, N363, and N384 are each glycosylated (N-linked (GlcNAc...) asparagine). One can recognise an FAD-binding PCMH-type domain in the interval 126–305 (VIGTYVQYAV…YSMTVKAHAN (180 aa)).

Belongs to the oxygen-dependent FAD-linked oxidoreductase family. FAD serves as cofactor.

It functions in the pathway secondary metabolite biosynthesis. Its function is as follows. FAD-linked oxidoreductase; part of the SOR gene cluster that mediates the biosynthesis of sorbicillinoids, a diverse group of yellow secondary metabolites that restrict growth of competing pathogenic fungi but not of bacteria. Sorbicillinoids biosynthesis requires the action of two PKSs. The SOR cluster is required for the production of trichodimerol and dihydrotrichotetronin, with sor2 being sufficient for production of trichodimerol, but not dihydrotrichotetronin in the light. Sor1 iteratively combines three acetyl units and the growing chain is modified by the ketoacyl reductase subunit, and optional by the enoyl reductase subunit in the second cycle. The polyketide is then handed over to the PKS sor2, which adds three more acetyl units, and two methyl groups. Sor2 releases an aldehyde, which undergoes spontaneous cyclization resulting in the formation of sorbicillin or 2',3'-dihydrosorbicillin. The monooxygenase sor5 oxidizes sorbicillin and 2',3'-dihydrosorbicillin to 2',3'-dihydrosorbicillinol and sorbicillinol, respectively. The oxidoreductase sor8 further converts sorbicillinol into oxosorbicillinol. Sorbicillinol is the building block for the other sorbicillinoids such as disorbicillinol, bisvertinolon, dihydrobisvertinolone, and dihydrotrichotetronine. This is FAD-linked oxidoreductase sor8 from Hypocrea jecorina (strain QM6a) (Trichoderma reesei).